The primary structure comprises 430 residues: Probable transporter SCO4007 (430 aa).

Over residues 1 to 17 (MPSSPSSTTPAPTSTPA) the composition is skewed to low complexity. Positions 1 to 26 (MPSSPSSTTPAPTSTPAARREPSGKG) are disordered. 11 consecutive transmembrane segments (helical) span residues 34-54 (LFLP…YLAA), 70-90 (AVAW…LFFA), 101-121 (LVAA…ASAG), 126-146 (AGAV…VPLV), 159-179 (VAAV…LGGL), 188-208 (AVFV…AYIL), 244-264 (AGMY…LTEG), 275-295 (GLFG…GGLV), 315-335 (VPLF…AVLV), 362-382 (TAYV…AGPA), and 383-403 (FGHW…VLGW).

The protein belongs to the major facilitator superfamily.

It is found in the cell membrane. The sequence is that of Probable transporter SCO4007 from Streptomyces coelicolor (strain ATCC BAA-471 / A3(2) / M145).